The following is a 35-amino-acid chain: Alpha-amanitin proprotein (35 aa).

A propeptide spanning residues 1–10 (MSDINATRLP) is cleaved from the precursor. Residue Ile11 is modified to (3R,4R)-4,5-dihydroxyisoleucine; in form alpha-amanitin. A (3R,4S)-4-hydroxyisoleucine; in form gamma-amanitin modification is found at Ile11. A cross-link (cyclopeptide (Ile-Pro)) is located at residues 11–18 (IWGIGCNP). A cross-link (2'-cysteinyl-6'-hydroxytryptophan sulfoxide (Trp-Cys)) is located at residues 12 to 16 (WGIGC). The residue at position 18 (Pro18) is a 4-hydroxyproline. Positions 19–35 (CVGDDVTTLLTRGEALC) are excised as a propeptide.

Belongs to the MSDIN fungal toxin family. Post-translationally, processed by the macrocyclase-peptidase enzyme POPB to yield a toxic cyclic decapeptide. POPB first removes 10 residues from the N-terminus. Conformational trapping of the remaining peptide forces the enzyme to release this intermediate rather than proceed to macrocyclization. The enzyme rebinds the remaining peptide in a different conformation and catalyzes macrocyclization of the N-terminal 8 residues.

Major toxin belonging to the bicyclic octapeptides amatoxins that acts by binding non-competitively to RNA polymerase II and greatly slowing the elongation of transcripts from target promoters. This is Alpha-amanitin proprotein from Amanita bisporigera (Destroying angel).